Reading from the N-terminus, the 732-residue chain is Polyribonucleotide nucleotidyltransferase (732 aa).

Residues aspartate 483 and aspartate 489 each coordinate Mg(2+). The KH domain occupies 550–609 (PRIVTVQIPVDKIGELIGPKGKNIRGIQDETGAELSVEDDGTVTIAAVGGDSMERAKQMV). The region spanning 619–687 (GETYEGTVKT…ERGRLRLSMK (69 aa)) is the S1 motif domain. The interval 684 to 732 (LSMKALLPKPEGMPDEPPQSERPRRDDGERSGGDRGGRGGRNGGGRDRR) is disordered. A compositionally biased stretch (basic and acidic residues) spans 702 to 720 (QSERPRRDDGERSGGDRGG).

This sequence belongs to the polyribonucleotide nucleotidyltransferase family. Mg(2+) serves as cofactor.

It localises to the cytoplasm. The catalysed reaction is RNA(n+1) + phosphate = RNA(n) + a ribonucleoside 5'-diphosphate. Involved in mRNA degradation. Catalyzes the phosphorolysis of single-stranded polyribonucleotides processively in the 3'- to 5'-direction. The polypeptide is Polyribonucleotide nucleotidyltransferase (Gemmatimonas aurantiaca (strain DSM 14586 / JCM 11422 / NBRC 100505 / T-27)).